Here is a 132-residue protein sequence, read N- to C-terminus: Movement protein TGB3 (132 aa).

The Cytoplasmic portion of the chain corresponds to 1–11; that stretch reads MVLVVKVDLSN. The helical transmembrane segment at 12-32 threads the bilayer; sequence IVLYIVAGCVVVSMLYSPFFS. Over 33-109 the chain is Lumenal; it reads NDVKASSYAG…TETLFIILSR (77 aa). Residues 110-130 form a helical membrane-spanning segment; sequence LFGLAVFLFMICLMSIVWFWC. Over 131–132 the chain is Cytoplasmic; sequence HR.

Belongs to the benyvirus TGB3 movement protein family. In terms of assembly, interacts with movement proteins TGB1 and TGB2.

It localises to the host cell junction. Its subcellular location is the host plasmodesma. The protein resides in the host endoplasmic reticulum membrane. Its function is as follows. Participates in the transport of viral RNA to the plasmodesmata. TGBp3 most probably contains signals of plasmodesmata targeting is therefore involved in the targeting of TGBp2, and viral RNAs-TGBp1 (RNP complex), to plasmodesmata. Can gate plasmodesmata and increase their size exclusion limit. The protein is Movement protein TGB3 of Beta macrocarpa (Beet).